A 264-amino-acid chain; its full sequence is Potassium channel regulatory protein (264 aa).

The 70-residue stretch at 5-74 (DLVTLNVGGR…LRNHELLLPS (70 aa)) folds into the BTB domain.

In terms of assembly, can form homooligomers. Interacts with KCNA1 (via cytoplasmic N-terminal domain) and KCNA4.

Its subcellular location is the endoplasmic reticulum. Functionally, inhibits potassium fluxes in cells. May regulate Kv1 family channel proteins by retaining a fraction of channels in endomembranes. The polypeptide is Potassium channel regulatory protein (Kcnrg) (Mus musculus (Mouse)).